The following is a 962-amino-acid chain: RNA-binding protein 15 (962 aa).

Composition is skewed to basic and acidic residues over residues 1–10, 34–52, and 59–72; these read MRSAGREPLP, LRRD…ERSP, and RGGE…ERSK. The segment at 1 to 167 is disordered; it reads MRSAGREPLP…SAPGGGDGVE (167 aa). The span at 82–94 shows a compositional bias: low complexity; it reads GSSSGKTDSGGSR. Residues 97-112 show a composition bias toward basic and acidic residues; it reads LHLDKSSSRGGSREYE. Ser108 carries the phosphoserine modification. Residues 118–129 show a composition bias toward low complexity; sequence SSSRLHSYSSPS. A compositionally biased stretch (gly residues) spans 134 to 149; that stretch reads SGGGESRSSSRGGGGE. The segment covering 150-159 has biased composition (low complexity); the sequence is SRSSGAASSA. The RRM 1 domain occupies 169-251; that stretch reads KTLKISELGS…RPLKIEAVYV (83 aa). Phosphoserine is present on residues Ser178, Ser207, and Ser209. Lys245 is covalently cross-linked (Glycyl lysine isopeptide (Lys-Gly) (interchain with G-Cter in SUMO2)). 3 positions are modified to phosphoserine: Ser252, Ser256, and Ser258. Residues 257-297 are disordered; sequence RSPLDKDAYAPSSSVVGTSVGSHRHAPGGGGGQRSLSPGGA. Tyr265 bears the Phosphotyrosine mark. Positions 268-277 are enriched in low complexity; it reads SSSVVGTSVG. 3 positions are modified to phosphoserine: Ser291, Ser293, and Ser364. RRM domains follow at residues 373–450 and 454–528; these read RTLF…YGKA and TRLW…FADT. Glycyl lysine isopeptide (Lys-Gly) (interchain with G-Cter in SUMO2) cross-links involve residues Lys405, Lys419, and Lys444. Lys449 carries the post-translational modification N6-acetyllysine. 2 stretches are compositionally biased toward basic and acidic residues: residues 553–580 and 612–661; these read GHRA…RDLY and SLDR…SERP. Positions 553–779 are disordered; that stretch reads GHRAPDPLRS…KQDGGTAPVA (227 aa). Thr567 is modified (phosphothreonine). Arg577 is modified (asymmetric dimethylarginine; alternate; by PRMT1). Omega-N-methylarginine; alternate; by PRMT1 is present on Arg577. Phosphoserine is present on residues Ser621, Ser655, Ser670, Ser674, and Ser701. Basic and acidic residues-rich tracts occupy residues 673 to 692, 701 to 729, and 742 to 751; these read RSPE…DRSS, SPVR…AERD, and NPLKKEDRSD. A Glycyl lysine isopeptide (Lys-Gly) (interchain with G-Cter in SUMO2) cross-link involves residue Lys745. Residues 754 to 771 are compositionally biased toward low complexity; the sequence is APSASTSSSKQKPPSQKQ. A phosphoserine mark is found at Ser768 and Ser782. The SPOC domain occupies 778-957; that stretch reads VAASSPKLCL…YLVMIIVRAK (180 aa). The interval 866–885 is disordered; that stretch reads GSSDSRSSSSSATSDTAAST. Positions 867-885 are enriched in low complexity; that stretch reads SSDSRSSSSSATSDTAAST. A Phosphoserine modification is found at Ser936.

Belongs to the RRM Spen family. Component of the WMM complex, a N6-methyltransferase complex composed of a catalytic subcomplex, named MAC, and of an associated subcomplex, named MACOM. The MAC subcomplex is composed of METTL3 and METTL14. The MACOM subcomplex is composed of WTAP, ZC3H13, CBLL1/HAKAI, VIRMA, and, in some cases of RBM15 (RBM15 or RBM15B). Also a component of a MACOM-like complex, named WTAP complex, composed of WTAP, ZC3H13, CBLL1, VIRMA, RBM15, BCLAF1 and THRAP3. Interacts with RBPJ. Interacts (via SPOC domain) with SETD1B. Interacts with NXF1, the interaction is required to promote mRNA export. Interacts with SF3B1. Post-translationally, methylated at Arg-577 by PRMT1, leading to promote ubiquitination by CNOT4 and subsequent degradation by the proteasome. Ubiquitinated by CNOT4 following methylation at Arg-577 by PRMT1.

The protein localises to the nucleus speckle. The protein resides in the nucleus. It localises to the nucleoplasm. Its subcellular location is the nucleus envelope. It is found in the nucleus membrane. RNA-binding protein that acts as a key regulator of N6-methyladenosine (m6A) methylation of RNAs, thereby regulating different processes, such as hematopoietic cell homeostasis, alternative splicing of mRNAs and X chromosome inactivation mediated by Xist RNA. Associated component of the WMM complex, a complex that mediates N6-methyladenosine (m6A) methylation of RNAs, a modification that plays a role in the efficiency of mRNA splicing and RNA processing. Plays a key role in m6A methylation, possibly by binding target RNAs and recruiting the WMM complex. Involved in random X inactivation mediated by Xist RNA: acts by binding Xist RNA and recruiting the WMM complex, which mediates m6A methylation, leading to target YTHDC1 reader on Xist RNA and promoting transcription repression activity of Xist. Required for the development of multiple tissues, such as the maintenance of the homeostasis of long-term hematopoietic stem cells and for megakaryocyte (MK) and B-cell differentiation. Regulates megakaryocyte differentiation by regulating alternative splicing of genes important for megakaryocyte differentiation; probably regulates alternative splicing via m6A regulation. Required for placental vascular branching morphogenesis and embryonic development of the heart and spleen. Acts as a regulator of thrombopoietin response in hematopoietic stem cells by regulating alternative splicing of MPL. May also function as an mRNA export factor, stimulating export and expression of RTE-containing mRNAs which are present in many retrotransposons that require to be exported prior to splicing. High affinity binding of pre-mRNA to RBM15 may allow targeting of the mRNP to the export helicase DBP5 in a manner that is independent of splicing-mediated NXF1 deposition, resulting in export prior to splicing. May be implicated in HOX gene regulation. The sequence is that of RNA-binding protein 15 from Mus musculus (Mouse).